The sequence spans 122 residues: MIFSNKNKIISRIRRSMKTRCKIKKLGAIRLVVHRTSRHMYAQIISSKEAKVLVFASTLERKINCSLKYTGNKEAAAKIGKIIAERALSKGISHVSFDRSGFKYHGRVQVLAESAREVGLKF.

The protein belongs to the universal ribosomal protein uL18 family. Part of the 50S ribosomal subunit; part of the 5S rRNA/L5/L18/L25 subcomplex. Contacts the 5S and 23S rRNAs.

In terms of biological role, this is one of the proteins that bind and probably mediate the attachment of the 5S RNA into the large ribosomal subunit, where it forms part of the central protuberance. The polypeptide is Large ribosomal subunit protein uL18 (Buchnera aphidicola subsp. Acyrthosiphon pisum (strain 5A)).